A 303-amino-acid polypeptide reads, in one-letter code: Probable 5-dehydro-4-deoxyglucarate dehydratase (303 aa).

The protein belongs to the DapA family.

It carries out the reaction 5-dehydro-4-deoxy-D-glucarate + H(+) = 2,5-dioxopentanoate + CO2 + H2O. Its pathway is carbohydrate acid metabolism; D-glucarate degradation; 2,5-dioxopentanoate from D-glucarate: step 2/2. This chain is Probable 5-dehydro-4-deoxyglucarate dehydratase, found in Pseudomonas putida (strain W619).